We begin with the raw amino-acid sequence, 329 residues long: CDP-6-deoxy-L-threo-D-glycero-4-hexulose-3-dehydrase reductase (329 aa).

The 2Fe-2S ferredoxin-type domain maps to 2–93 (SLNVKLHPSG…ELDVNYYPEL (92 aa)). 4 residues coordinate [2Fe-2S] cluster: C37, C42, C45, and C75. In terms of domain architecture, FAD-binding FR-type spans 98 to 197 (KKTYPCKLDS…EGPQGTFFVR (100 aa)).

As to quaternary structure, monomer.

Its pathway is nucleotide-sugar biosynthesis; CDP-ascarylose biosynthesis. The protein operates within bacterial outer membrane biogenesis; lipopolysaccharide biosynthesis. Participates in the conversion of CDP-6-deoxy-D-glycero-L-threo-4-hexulose to 3,6-dideoxy-D-glycero-D-glycero-4-hexulose together with CDP-6-deoxy-D-glycero-L-threo-4-hexulose-3-dehydrase (E1) in two consecutive steps. The detailed mechanism of E3 is not yet resolved. The protein is CDP-6-deoxy-L-threo-D-glycero-4-hexulose-3-dehydrase reductase (ascD) of Yersinia pseudotuberculosis serotype I (strain IP32953).